The chain runs to 360 residues: MLNRTIAKRTLATAAQAERTLPKKYGGRFTVTLIPGDGVGKEITDSVRTIFEAENIPIDWETINIKQTDHKEGVYEAVESLKRNKIGLKGLWHTPADQTGHGSLNVALRKQLDIYANVALFKSLKGVKTRIPDIDLIVIRENTEGEFSGLEHESVPGVVESLKVMTRPKTERIARFAFDFAKKYNRKSVTAVHKANIMKLGDGLFRNIITEIGQKEYPDIDVSSIIVDNASMQAVAKPHQFDVLVTPSMYGTILGNIGAALIGGPGLVAGANFGRDYAVFEPGSRHVGLDIKGQNVANPTAMILSSTLMLNHLGLNEYATRISKAVHETIAEGKHTTRDIGGSSSTTDFTNEIINKLSTM.

Residues 1–11 constitute a mitochondrion transit peptide; sequence MLNRTIAKRTL. Substrate contacts are provided by arginine 109, arginine 140, and aspartate 228. Residue aspartate 228 coordinates Mg(2+).

The protein belongs to the isocitrate and isopropylmalate dehydrogenases family. As to quaternary structure, octamer of two non-identical subunits IDH1 and IDH2. Mg(2+) is required as a cofactor. Requires Mn(2+) as cofactor.

It is found in the mitochondrion. It carries out the reaction D-threo-isocitrate + NAD(+) = 2-oxoglutarate + CO2 + NADH. Allosterically regulated by several compounds including AMP, NAD(+), and citrate. Performs an essential role in the oxidative function of the citric acid cycle. Also binds RNA; specifically to the 5'-untranslated leaders of mitochondrial mRNAs. The chain is Isocitrate dehydrogenase [NAD] subunit 1, mitochondrial (IDH1) from Saccharomyces cerevisiae (strain ATCC 204508 / S288c) (Baker's yeast).